A 1396-amino-acid chain; its full sequence is uncharacterized protein (1396 aa).

Residue 88-95 (AYKKWGRS) participates in ATP binding. 2 disordered regions span residues 146 to 165 (EKIH…LSPT) and 198 to 388 (KPCS…VKDL). Low complexity predominate over residues 198-221 (KPCSYSSSSSSSTVPPASTDTSSP). Positions 242–268 (MHEKAQSRSRHEKESKLSSSTIEEKPA) are enriched in basic and acidic residues. The span at 286–300 (SWSSGSSEAGSSSSG) shows a compositional bias: low complexity. The segment covering 312-327 (VKVRHKAREIRNRKGR) has biased composition (basic residues). Phosphoserine is present on residues Ser817 and Ser1083. The interval 1113–1137 (PISASELSPGGGSESEFESEKDEAS) is disordered. Ser1197 and Ser1339 each carry phosphoserine. The interval 1347 to 1396 (TGERGSETKPNGLHRKMCSSASSDTGDTGSEAGGEWVGPSREELFSRTHL) is disordered. Residues 1365–1376 (SSASSDTGDTGS) show a composition bias toward low complexity. The span at 1386-1396 (SREELFSRTHL) shows a compositional bias: basic and acidic residues.

This is an uncharacterized protein from Mus musculus (Mouse).